We begin with the raw amino-acid sequence, 178 residues long: ATP synthase subunit delta (178 aa).

Belongs to the ATPase delta chain family. As to quaternary structure, F-type ATPases have 2 components, F(1) - the catalytic core - and F(0) - the membrane proton channel. F(1) has five subunits: alpha(3), beta(3), gamma(1), delta(1), epsilon(1). F(0) has three main subunits: a(1), b(2) and c(10-14). The alpha and beta chains form an alternating ring which encloses part of the gamma chain. F(1) is attached to F(0) by a central stalk formed by the gamma and epsilon chains, while a peripheral stalk is formed by the delta and b chains.

The protein resides in the cell membrane. Functionally, f(1)F(0) ATP synthase produces ATP from ADP in the presence of a proton or sodium gradient. F-type ATPases consist of two structural domains, F(1) containing the extramembraneous catalytic core and F(0) containing the membrane proton channel, linked together by a central stalk and a peripheral stalk. During catalysis, ATP synthesis in the catalytic domain of F(1) is coupled via a rotary mechanism of the central stalk subunits to proton translocation. Its function is as follows. This protein is part of the stalk that links CF(0) to CF(1). It either transmits conformational changes from CF(0) to CF(1) or is implicated in proton conduction. In Geobacillus sp. (strain WCH70), this protein is ATP synthase subunit delta.